An 85-amino-acid polypeptide reads, in one-letter code: Homeobox protein knotted-1-like 4 (85 aa).

The ELK domain occupies 1–21 (ELKYQLLKKYSGYLSSLRQEF). Residues 22–85 (SKKKKKGKLP…NQRKRHWKPS (64 aa)) constitute a DNA-binding region (homeobox; TALE-type).

This sequence belongs to the TALE/KNOX homeobox family. As to expression, strongly expressed in ear inflorescence primordia and shoot meristem. Weakly expressed in embryos. Absent from leaves.

The protein localises to the nucleus. Functionally, probably binds to the DNA sequence 5'-TGAC-3'. The sequence is that of Homeobox protein knotted-1-like 4 (KNOX4) from Zea mays (Maize).